Reading from the N-terminus, the 833-residue chain is Leucine--tRNA ligase (833 aa).

The 'HIGH' region signature appears at 41 to 52 (PYPSGAGLHVGH). A 'KMSKS' region motif is present at residues 610 to 614 (KMSKS). Position 613 (lysine 613) interacts with ATP.

Belongs to the class-I aminoacyl-tRNA synthetase family.

The protein localises to the cytoplasm. It catalyses the reaction tRNA(Leu) + L-leucine + ATP = L-leucyl-tRNA(Leu) + AMP + diphosphate. The chain is Leucine--tRNA ligase from Streptococcus equi subsp. equi (strain 4047).